A 65-amino-acid chain; its full sequence is Putative per-hexamer repeat protein 2 (65 aa).

In Mus musculus (Mouse), this protein is Putative per-hexamer repeat protein 2 (Phxr2).